The following is a 208-amino-acid chain: uncharacterized protein (208 aa).

Disordered stretches follow at residues 74–117 (FEYK…RDSP) and 181–208 (ESKL…RKFK). Residues 184–208 (LGSSEDSGTDRFSSNTSGSSGRKFK) show a composition bias toward polar residues.

This is an uncharacterized protein from Mus musculus (Mouse).